The primary structure comprises 175 residues: MASLNDSHFDLFDLPAQFALDASALDHAYRTVQAQVHPDRFAAAGDAQKRIAMQWATRTNEAYQTLRDPLKRATYLLHLRGIDVGAHENTAMEPAFLMQQMEWREGIEDAAAAKNVDALDALLTELRDEERMRFDKLGALLDSGANQAAGEAVRQLMFIERVASEIGTQIERLDN.

Positions 7 to 79 (SHFDLFDLPA…LKRATYLLHL (73 aa)) constitute a J domain.

It belongs to the HscB family. In terms of assembly, interacts with HscA and stimulates its ATPase activity.

Its function is as follows. Co-chaperone involved in the maturation of iron-sulfur cluster-containing proteins. Seems to help targeting proteins to be folded toward HscA. The sequence is that of Co-chaperone protein HscB homolog from Paraburkholderia phytofirmans (strain DSM 17436 / LMG 22146 / PsJN) (Burkholderia phytofirmans).